Consider the following 137-residue polypeptide: Small ribosomal subunit protein uS9 (137 aa).

Basic and acidic residues predominate over residues 105-117; that stretch reads LKVEGYLTRDPRA. The interval 105–137 is disordered; it reads LKVEGYLTRDPRAKERKKYGLRKARKAPQYSKR. A compositionally biased stretch (basic residues) spans 118–137; sequence KERKKYGLRKARKAPQYSKR.

It belongs to the universal ribosomal protein uS9 family.

This is Small ribosomal subunit protein uS9 from Cyanothece sp. (strain PCC 7425 / ATCC 29141).